The sequence spans 300 residues: Putative zinc finger protein 705EP (300 aa).

In terms of domain architecture, KRAB spans 7-78 (VTFEDVAIDF…GREFLQDQNP (72 aa)). Residues 172–194 (YQCNLCEKAYTNCFHLRRPKMTH) form a C2H2-type 1; degenerate zinc finger. 2 C2H2-type zinc fingers span residues 200 to 222 (YTCHLCRKAFTQCSHLRRHEKTH) and 228 to 250 (YKCHQCGKAFIQSFNLRRHERTH). Residues 256 to 278 (YECDNSGKAFSQSSGFRGNKIIH) form a C2H2-type 4; degenerate zinc finger.

It belongs to the krueppel C2H2-type zinc-finger protein family.

The protein localises to the nucleus. In terms of biological role, may be involved in transcriptional regulation. The chain is Putative zinc finger protein 705EP from Homo sapiens (Human).